The following is a 255-amino-acid chain: Poxin (255 aa).

It belongs to the poxin family. Highly divergent.

It catalyses the reaction 2',3'-cGAMP + H2O = Gp(2'-5')Ap(3') + H(+). Functionally, nuclease that cleaves 2',3'-cGAMP. This Bombyx mori (Silk moth) protein is Poxin.